The chain runs to 208 residues: Protein-L-isoaspartate O-methyltransferase (208 aa).

The active site involves serine 59.

This sequence belongs to the methyltransferase superfamily. L-isoaspartyl/D-aspartyl protein methyltransferase family.

The protein resides in the cytoplasm. It catalyses the reaction [protein]-L-isoaspartate + S-adenosyl-L-methionine = [protein]-L-isoaspartate alpha-methyl ester + S-adenosyl-L-homocysteine. Catalyzes the methyl esterification of L-isoaspartyl residues in peptides and proteins that result from spontaneous decomposition of normal L-aspartyl and L-asparaginyl residues. It plays a role in the repair and/or degradation of damaged proteins. This chain is Protein-L-isoaspartate O-methyltransferase, found in Aliivibrio fischeri (strain ATCC 700601 / ES114) (Vibrio fischeri).